The chain runs to 706 residues: DNA ligase (706 aa).

Residues 47-51 (DSEYD), 96-97 (SI), and E133 each bind NAD(+). K135 serves as the catalytic N6-AMP-lysine intermediate. 4 residues coordinate NAD(+): R156, E192, K323, and K347. Residues C441, C444, C459, and C465 each coordinate Zn(2+). One can recognise a BRCT domain in the interval 624-706 (VAPKPLSGKT…MRLLASAEAE (83 aa)).

It belongs to the NAD-dependent DNA ligase family. LigA subfamily. The cofactor is Mg(2+). Mn(2+) is required as a cofactor.

The catalysed reaction is NAD(+) + (deoxyribonucleotide)n-3'-hydroxyl + 5'-phospho-(deoxyribonucleotide)m = (deoxyribonucleotide)n+m + AMP + beta-nicotinamide D-nucleotide.. DNA ligase that catalyzes the formation of phosphodiester linkages between 5'-phosphoryl and 3'-hydroxyl groups in double-stranded DNA using NAD as a coenzyme and as the energy source for the reaction. It is essential for DNA replication and repair of damaged DNA. The polypeptide is DNA ligase (Polaromonas sp. (strain JS666 / ATCC BAA-500)).